The following is a 259-amino-acid chain: Haloacid dehalogenase-like hydrolase domain-containing protein 2 (259 aa).

Positions 13 and 15 each coordinate Mg(2+). Substrate is bound by residues 13–15 (DLS) and 46–47 (TN). Residues 47 to 71 (NTTKESKQDLLERLRKLEFDISEDE) are a coiled coil. Residue lysine 50 is modified to N6-succinyllysine. Lysine 179 is a binding site for substrate. A Mg(2+)-binding site is contributed by aspartate 204.

This sequence belongs to the HAD-like hydrolase superfamily. It depends on Mg(2+) as a cofactor.

The polypeptide is Haloacid dehalogenase-like hydrolase domain-containing protein 2 (HDHD2) (Homo sapiens (Human)).